The chain runs to 377 residues: Probable transposase for insertion sequence element IS5377 (377 aa).

The protein belongs to the transposase 11 family.

The polypeptide is Probable transposase for insertion sequence element IS5377 (Geobacillus stearothermophilus (Bacillus stearothermophilus)).